We begin with the raw amino-acid sequence, 398 residues long: Sphingosine 1-phosphate receptor 5 (398 aa).

Topologically, residues 1–40 (MESGLLRPAPVSEVIVLHYNYTGKLRGARYQPGAGLRADA) are extracellular. N20 carries an N-linked (GlcNAc...) asparagine glycan. Residues 41–61 (VVCLAVCAFIVLENLAVLLVL) traverse the membrane as a helical segment. Over 62-70 (GRHPRFHAP) the chain is Cytoplasmic. Residues 71–91 (MFLLLGSLTLSDLLAGAAYAA) form a helical membrane-spanning segment. Topologically, residues 92 to 111 (NILLSGPLTLKLSPALWFAR) are extracellular. Residues 112–132 (EGGVFVALTASVLSLLAIALE) traverse the membrane as a helical segment. Residues 133-151 (RSLTMARRGPAPVSSRGRT) lie on the Cytoplasmic side of the membrane. The chain crosses the membrane as a helical span at residues 152 to 172 (LAMAAAAWGVSLLLGLLPALG). The Extracellular portion of the chain corresponds to 173–192 (WNCLGRLDACSTVLPLYAKA). A helical transmembrane segment spans residues 193–213 (YVLFCVLAFVGILAAICALYA). The Cytoplasmic portion of the chain corresponds to 214-252 (RIYCQVRANARRLPARPGTAGTTSTRARRKPRSLALLRT). Residues 253–273 (LSVVLLAFVACWGPLFLLLLL) form a helical membrane-spanning segment. Over 274–287 (DVACPARTCPVLLQ) the chain is Extracellular. A helical membrane pass occupies residues 288 to 308 (ADPFLGLAMANSLLNPIIYTL). The Cytoplasmic segment spans residues 309–398 (TNRDLRHALL…RTLVSEPAAD (90 aa)). C323 is lipidated: S-palmitoyl cysteine. The segment at 329 to 398 (GRDPSGSQQS…RTLVSEPAAD (70 aa)) is disordered. Over residues 333-347 (SGSQQSASAAEASGG) the composition is skewed to low complexity. Position 381 is a phosphoserine (S381).

It belongs to the G-protein coupled receptor 1 family. As to expression, widely expressed in the brain, most prominently in the corpus callosum, which is predominantly white matter. Detected in spleen, peripheral blood leukocytes, placenta, lung, aorta and fetal spleen. Low-level signal detected in many tissue extracts. Overexpressed in leukemic large granular lymphocytes. Isoform 1 is predominantly expressed in peripheral tissues. Isoform 2 is expressed in brain, spleen and peripheral blood leukocytes.

It localises to the cell membrane. Its function is as follows. Receptor for the lysosphingolipid sphingosine 1-phosphate (S1P). S1P is a bioactive lysophospholipid that elicits diverse physiological effect on most types of cells and tissues. Is coupled to both the G(i/0)alpha and G(12) subclass of heteromeric G-proteins. May play a regulatory role in the transformation of radial glial cells into astrocytes and may affect proliferative activity of these cells. The sequence is that of Sphingosine 1-phosphate receptor 5 (S1PR5) from Homo sapiens (Human).